A 391-amino-acid polypeptide reads, in one-letter code: Na(+)/H(+) antiporter NhaA (391 aa).

A run of 11 helical transmembrane segments spans residues 14 to 34 (AGGI…NSPL), 59 to 79 (LLLW…GLEV), 95 to 115 (SLPS…YLLF), 124 to 144 (AGWA…MALL), 154 to 174 (VFLL…IALF), 177 to 197 (SDLS…LVGL), 213 to 233 (LILW…GVII), 261 to 281 (FLIL…NMSL), 290 to 310 (IGIA…FSFI), 328 to 348 (IAPV…IASL), and 363 to 383 (LGTL…LSKV).

This sequence belongs to the NhaA Na(+)/H(+) (TC 2.A.33) antiporter family.

The protein resides in the cell inner membrane. The catalysed reaction is Na(+)(in) + 2 H(+)(out) = Na(+)(out) + 2 H(+)(in). Its function is as follows. Na(+)/H(+) antiporter that extrudes sodium in exchange for external protons. The sequence is that of Na(+)/H(+) antiporter NhaA from Shewanella putrefaciens (strain CN-32 / ATCC BAA-453).